Consider the following 566-residue polypeptide: Alpha-keto-acid decarboxylase (566 aa).

Position 61 (Glu-61) interacts with thiamine diphosphate. The interval Thr-396–Val-478 is thiamine pyrophosphate binding. Mg(2+) is bound by residues Asp-446, Asn-473, and Gly-475.

The protein belongs to the TPP enzyme family. A metal cation serves as cofactor. It depends on thiamine diphosphate as a cofactor.

Functionally, decarboxylates branched-chain and aromatic alpha-keto acids to aldehydes. The chain is Alpha-keto-acid decarboxylase (kdc) from Mycobacterium ulcerans (strain Agy99).